An 89-amino-acid polypeptide reads, in one-letter code: Small ribosomal subunit protein uS15 (89 aa).

It belongs to the universal ribosomal protein uS15 family. As to quaternary structure, part of the 30S ribosomal subunit. Forms a bridge to the 50S subunit in the 70S ribosome, contacting the 23S rRNA.

Its function is as follows. One of the primary rRNA binding proteins, it binds directly to 16S rRNA where it helps nucleate assembly of the platform of the 30S subunit by binding and bridging several RNA helices of the 16S rRNA. In terms of biological role, forms an intersubunit bridge (bridge B4) with the 23S rRNA of the 50S subunit in the ribosome. In Limosilactobacillus fermentum (strain NBRC 3956 / LMG 18251) (Lactobacillus fermentum), this protein is Small ribosomal subunit protein uS15.